Reading from the N-terminus, the 209-residue chain is Uracil phosphoribosyltransferase (209 aa).

5-phospho-alpha-D-ribose 1-diphosphate is bound by residues Arg79, Arg104, and 131-139 (DPMLATGGS). Uracil contacts are provided by residues Ile194 and 199-201 (GDA). Residue Asp200 participates in 5-phospho-alpha-D-ribose 1-diphosphate binding.

It belongs to the UPRTase family. Mg(2+) serves as cofactor.

The enzyme catalyses UMP + diphosphate = 5-phospho-alpha-D-ribose 1-diphosphate + uracil. It functions in the pathway pyrimidine metabolism; UMP biosynthesis via salvage pathway; UMP from uracil: step 1/1. Allosterically activated by GTP. In terms of biological role, catalyzes the conversion of uracil and 5-phospho-alpha-D-ribose 1-diphosphate (PRPP) to UMP and diphosphate. In Levilactobacillus brevis (strain ATCC 367 / BCRC 12310 / CIP 105137 / JCM 1170 / LMG 11437 / NCIMB 947 / NCTC 947) (Lactobacillus brevis), this protein is Uracil phosphoribosyltransferase.